Consider the following 150-residue polypeptide: Large ribosomal subunit protein bL9 (150 aa).

The protein belongs to the bacterial ribosomal protein bL9 family.

Functionally, binds to the 23S rRNA. This is Large ribosomal subunit protein bL9 from Burkholderia thailandensis (strain ATCC 700388 / DSM 13276 / CCUG 48851 / CIP 106301 / E264).